The following is a 385-amino-acid chain: Outer membrane protein assembly factor BamB (385 aa).

The N-terminal stretch at 1–20 (MRKVLKKAALCTFGFSMLFG) is a signal peptide. Cys21 is lipidated: N-palmitoyl cysteine. A lipid anchor (S-diacylglycerol cysteine) is attached at Cys21.

Belongs to the BamB family. As to quaternary structure, part of the Bam complex.

The protein localises to the cell outer membrane. In terms of biological role, part of the outer membrane protein assembly complex, which is involved in assembly and insertion of beta-barrel proteins into the outer membrane. The protein is Outer membrane protein assembly factor BamB of Aliivibrio fischeri (strain ATCC 700601 / ES114) (Vibrio fischeri).